Consider the following 101-residue polypeptide: Protein translation factor SUI1 homolog (101 aa).

The protein belongs to the SUI1 family.

The protein is Protein translation factor SUI1 homolog of Methanosphaera stadtmanae (strain ATCC 43021 / DSM 3091 / JCM 11832 / MCB-3).